Consider the following 363-residue polypeptide: MGDQPFIPPPQQTALTVNDHDEVTVWNAAPCPMLPRDQVYVRVEAVAINPSDTKMRGQFATPWAFLGTDYAGTVVAVGSDVTHIQVGDRVYGAQNEMCPRTPDQGAFSQYTVTRGRVWAKIPKGLSFEQAAALPAGISTAGLAMKLLGLPLPSPSADQPPTHSKPVYVLVYGGSTATATVTMQMLRLSGYIPIATCSPHNFDLAKSRGAEEVFDYRAPNLAQTIRTYTKNNLRYALDCITNVESTTFCFAAIGRAGGHYVSLNPFPEHAATRKMVTTDWTLGPTIFGEGSTWPAPYGRPGSEEERQFGEDLWRIAGQLVEDGRLVHHPLRVVQGGFDHIKQGMELVRKGELSGEKLVVRLEGP.

NADP(+) contacts are provided by residues serine 51–lysine 54, serine 174–threonine 177, serine 197–asparagine 200, tyrosine 215, leucine 262–asparagine 263, threonine 280, and leucine 351–serine 352. A lovB-binding region spans residues threonine 226–arginine 272.

This sequence belongs to the zinc-containing alcohol dehydrogenase family. As to quaternary structure, each MAT domain from the lovB homodimer binds one lovC molecule to form the final active lovB-lovC megasynthase complex.

It carries out the reaction holo-[lovastatin nonaketide synthase] + 9 malonyl-CoA + S-adenosyl-L-methionine + 11 NADPH + 19 H(+) = dihydromonacolin L-[lovastatin nonaketide synthase] + S-adenosyl-L-homocysteine + 9 CO2 + 11 NADP(+) + 9 CoA + 6 H2O. The protein operates within polyketide biosynthesis; lovastatin biosynthesis. In terms of biological role, trans-enoyl reductase; part of the gene cluster that mediates the biosynthesis of lovastatin (also known as mevinolin, mevacor or monacolin K), a hypolipidemic inhibitor of (3S)-hydroxymethylglutaryl-coenzyme A (HMG-CoA) reductase (HMGR). The first step in the biosynthesis of lovastatin is the production of dihydromonacolin L acid (DML) by the lovastatin nonaketide synthase lovB and the trans-acting enoyl reductase lovC (called the lovB-lovC megasynthase complex) via condensation of one acetyl-CoA unit and 8 malonyl-CoA units. The formation of the LovB/C complex is essential for the integrity of the catalytic chamber to the complete total synthesis of DML acid. Dihydromonacolin L acid is released from lovB by the thioesterase lovG. Next, dihydromonacolin L acid is oxidized by the dihydromonacolin L monooxygenase lovA twice to form monacolin J acid. The 2-methylbutyrate moiety of lovastatin is synthesized by the lovastatin diketide synthase lovF via condensation of one acetyl-CoA unit and one malonyl-CoA unit. Finally, the covalent attachment of this moiety to monacolin J acid is catalyzed by the transesterase lovD to yield lovastatin. LovD has broad substrate specificity and can also convert monacolin J to simvastatin using alpha-dimethylbutanoyl-S-methyl-3-mercaptopropionate (DMB-S-MMP) as the thioester acyl donor, and can also catalyze the reverse reaction and function as hydrolase in vitro. LovD has much higher activity with LovF-bound 2-methylbutanoate than with free diketide substrates. This is Lovastatin nonaketide synthase, enoyl reductase component lovC from Aspergillus terreus.